The primary structure comprises 531 residues: UDP-glucuronosyltransferase 1A6 (531 aa).

The first 26 residues, 1–26 (MACLLSAAQRASAGVLFVALWGTVLG), serve as a signal peptide directing secretion. Residue Asn-294 is glycosylated (N-linked (GlcNAc...) asparagine). The chain crosses the membrane as a helical span at residues 489 to 505 (VIGFLLAIVLTVAFVTF).

This sequence belongs to the UDP-glycosyltransferase family.

The protein localises to the microsome. It localises to the endoplasmic reticulum membrane. The enzyme catalyses glucuronate acceptor + UDP-alpha-D-glucuronate = acceptor beta-D-glucuronoside + UDP + H(+). The catalysed reaction is (5Z,8Z,11Z,14Z)-eicosatetraenoate + UDP-alpha-D-glucuronate = O-[(5Z),(8Z),(11Z),(14Z)-eicosatetraenoyl]-beta-D-glucuronate + UDP. It carries out the reaction 15-hydroxy-(5Z,8Z,11Z,13E)-eicosatetraenoate + UDP-alpha-D-glucuronate = 15-O-(beta-D-glucuronosyl)-(5Z,8Z,11Z,14Z)-eicosatetraenoate + UDP + H(+). It catalyses the reaction (E)-ferulate + UDP-alpha-D-glucuronate = (E)-4-O-(beta-D-glucuronosyl)-ferulate + UDP + H(+). The enzyme catalyses (E)-ferulate + UDP-alpha-D-glucuronate = (E)-ferulic acid beta-D-glucuronate ester + UDP. Functionally, UDP-glucuronosyltransferase (UGT) that catalyzes phase II biotransformation reactions in which lipophilic substrates are conjugated with glucuronic acid to facilitate their inactivation and excretion from the body. Essential for the elimination and detoxification of drugs, xenobiotics and endogenous compounds. Involved in the glucuronidation of arachidonic acid (AA) and AA-derived eicosanoids including 15-HETE and 20-HETE. Conjugates small planar phenolic molecules such as 4-nitrophenol, 1-naphthol, and 4-methylumbelliferone. The bulky phenol 4-hydroxybiphenyl, androgens and estrogens are not substrates. 2-hydroxybiphenyl is an excellent substrate. Involved in the glucuronidation of the phytochemical ferulic acid at the phenolic or the carboxylic acid group. In Oryctolagus cuniculus (Rabbit), this protein is UDP-glucuronosyltransferase 1A6 (UGT1).